A 220-amino-acid chain; its full sequence is Charged multivesicular body protein 3 (220 aa).

Residue glycine 2 is the site of N-myristoyl glycine attachment. Residues 22–54 (KIRKEMRVIDRQIRDIQREQEKVKRSIKESAKK) are a coiled coil. The important for autoinhibitory function stretch occupies residues 168-169 (IL). Positions 181–220 (PSKVTDALPEPEITGAMAASDEEEEEDLEAMHSRLAALRS) are disordered. Residues 201 to 209 (DEEEEEDLE) carry the MIT-interacting motif motif. Interaction with STAMBP stretches follow at residues 203-207 (EEEED) and 219-220 (RS).

Belongs to the SNF7 family. In terms of assembly, probable core component of the endosomal sorting required for transport complex III (ESCRT-III). ESCRT-III components are thought to multimerize to form a flat lattice on the perimeter membrane of the endosome. Several assembly forms of ESCRT-III may exist that interact and act sequentially.

The protein resides in the cytoplasm. The protein localises to the cytosol. Its subcellular location is the membrane. It is found in the endosome. It localises to the late endosome membrane. In terms of biological role, probable core component of the endosomal sorting required for transport complex III (ESCRT-III) which is involved in multivesicular bodies (MVBs) formation and sorting of endosomal cargo proteins into MVBs. MVBs contain intraluminal vesicles (ILVs) that are generated by invagination and scission from the limiting membrane of the endosome and mostly are delivered to lysosomes enabling degradation of membrane proteins, such as stimulated growth factor receptors, lysosomal enzymes and lipids. Involved in late stages of cytokinesis. Plays a role in endosomal sorting/trafficking of EGF receptor. This chain is Charged multivesicular body protein 3 (chmp3), found in Xenopus laevis (African clawed frog).